The chain runs to 442 residues: F-box/FBD/LRR-repeat protein At3g14710 (442 aa).

The region spanning 26–73 is the F-box domain; the sequence is DKFSSLLESVVSIILSQLPTAEAVSTSVLSKSWKNIWTNITDLHFDDT. LRR repeat units follow at residues 126-147, 151-172, and 173-194; these read NLQR…SLFP, SLVE…AILP, and NLKF…SKNL. In terms of domain architecture, FBD spans 370–414; that stretch reads VESPDCVTTMLKVLQIRNFKPNRLQISVLRYVLDNAEILGSVILS.

The sequence is that of F-box/FBD/LRR-repeat protein At3g14710 from Arabidopsis thaliana (Mouse-ear cress).